Reading from the N-terminus, the 110-residue chain is MSVVIRLARAGTKKRPVYHVVVADSRFPRDGRFIERLGYFNPLLPKDNEARLKLDMDKVKAWLAKGAQPSDRVMRFLDAAGVAKRAPRNNPEKAVPRKERKAAAEAAAKA.

The interval 84 to 110 (KRAPRNNPEKAVPRKERKAAAEAAAKA) is disordered. Residues 90-103 (NPEKAVPRKERKAA) show a composition bias toward basic and acidic residues.

The protein belongs to the bacterial ribosomal protein bS16 family.

The sequence is that of Small ribosomal subunit protein bS16 from Afipia carboxidovorans (strain ATCC 49405 / DSM 1227 / KCTC 32145 / OM5) (Oligotropha carboxidovorans).